A 440-amino-acid polypeptide reads, in one-letter code: Probable D-serine dehydratase (440 aa).

Position 120 is an N6-(pyridoxal phosphate)lysine (lysine 120).

It belongs to the serine/threonine dehydratase family. DsdA subfamily. Requires pyridoxal 5'-phosphate as cofactor.

The enzyme catalyses D-serine = pyruvate + NH4(+). This is Probable D-serine dehydratase from Shouchella clausii (strain KSM-K16) (Alkalihalobacillus clausii).